The primary structure comprises 167 residues: Ribosome maturation factor RimM (167 aa).

The PRC barrel domain maps to 93 to 165 (KGVYYDFQLI…QVIIDPIPGL (73 aa)).

It belongs to the RimM family. As to quaternary structure, binds ribosomal protein uS19.

The protein localises to the cytoplasm. In terms of biological role, an accessory protein needed during the final step in the assembly of 30S ribosomal subunit, possibly for assembly of the head region. Essential for efficient processing of 16S rRNA. May be needed both before and after RbfA during the maturation of 16S rRNA. It has affinity for free ribosomal 30S subunits but not for 70S ribosomes. This is Ribosome maturation factor RimM from Dehalococcoides mccartyi (strain ATCC BAA-2266 / KCTC 15142 / 195) (Dehalococcoides ethenogenes (strain 195)).